A 436-amino-acid polypeptide reads, in one-letter code: 3-ketoacyl-CoA thiolase (436 aa).

Cys99 serves as the catalytic Acyl-thioester intermediate. Residues His392 and Cys422 each act as proton acceptor in the active site.

The protein belongs to the thiolase-like superfamily. Thiolase family. In terms of assembly, heterotetramer of two alpha chains (FadJ) and two beta chains (FadI).

The protein resides in the cytoplasm. The catalysed reaction is an acyl-CoA + acetyl-CoA = a 3-oxoacyl-CoA + CoA. It functions in the pathway lipid metabolism; fatty acid beta-oxidation. Its function is as follows. Catalyzes the final step of fatty acid oxidation in which acetyl-CoA is released and the CoA ester of a fatty acid two carbons shorter is formed. This Photorhabdus laumondii subsp. laumondii (strain DSM 15139 / CIP 105565 / TT01) (Photorhabdus luminescens subsp. laumondii) protein is 3-ketoacyl-CoA thiolase.